Reading from the N-terminus, the 154-residue chain is Protein LOL1 (154 aa).

Putative zinc finger regions lie at residues 34–64, 73–103, and 111–141; these read QLVCSGCRNLLMYPVGATSVCCAVCNAVTAV, QLVCGGCHTLLMYIRGATSVQCSCCHTVNLA, and HVNCGNCMMLLMYQYGARSVKCAVCNFVTSV.

The protein localises to the nucleus. Its function is as follows. Positive regulator of reactive oxygen-induced cell death. May be involved in the repression of the copper/zinc superoxide dismutase CSD1 and CSD2 that detoxify accumulating superoxide before the reactive oxygen species (ROS) can trigger a cell death cascade. LSD1 and LOL1 have antagonistic effects on CSD1 and CSD2 accumulation to regulate oxidative stress-induced cell death. In Arabidopsis thaliana (Mouse-ear cress), this protein is Protein LOL1 (LOL1).